Consider the following 738-residue polypeptide: Putative RNA-binding protein EEED8.10 (738 aa).

Positions 112-201 (RKIVVSNISA…QVMVVSAYVS (90 aa)) constitute an RRM domain. A disordered region spans residues 211 to 237 (LSDDVGSREDTPLSRASSTQSLASGSE). Over residues 224–237 (SRASSTQSLASGSE) the composition is skewed to polar residues. One can recognise an F-box domain in the interval 239-297 (SFNLGNVPDKILRRVISFLPIHETIRLERVNKKFMEESIKSWELVNKIALARETVFNKQ).

The sequence is that of Putative RNA-binding protein EEED8.10 from Caenorhabditis elegans.